The primary structure comprises 328 residues: tRNA dimethylallyltransferase (328 aa).

25–32 lines the ATP pocket; the sequence is GNTGSGKS. 27-32 contacts substrate; sequence TGSGKS. Positions 50–53 are interaction with substrate tRNA; sequence DSRQ.

It belongs to the IPP transferase family. Monomer. The cofactor is Mg(2+).

The catalysed reaction is adenosine(37) in tRNA + dimethylallyl diphosphate = N(6)-dimethylallyladenosine(37) in tRNA + diphosphate. Catalyzes the transfer of a dimethylallyl group onto the adenine at position 37 in tRNAs that read codons beginning with uridine, leading to the formation of N6-(dimethylallyl)adenosine (i(6)A). The chain is tRNA dimethylallyltransferase from Dehalococcoides mccartyi (strain ATCC BAA-2100 / JCM 16839 / KCTC 5957 / BAV1).